Reading from the N-terminus, the 609-residue chain is X-ray repair cross-complementing protein 6 (609 aa).

Residues 1–28 are disordered; it reads MSGWESYYKTEGDEEAEEEQEENLEASG. N-acetylserine is present on serine 2. At serine 2 the chain carries Phosphoserine. Serine 6 carries the phosphoserine; by PRKDC modification. Acidic residues predominate over residues 12–24; sequence GDEEAEEEQEENL. Phosphoserine is present on serine 27. Lysine 31 functions as the Schiff-base intermediate with DNA; for 5'-deoxyribose-5-phosphate lyase activity in the catalytic mechanism. N6-acetyllysine is present on lysine 31. Residue serine 51 is modified to Phosphoserine; by PRKDC. In terms of domain architecture, Ku spans 261–468; sequence LKLNKDIVIS…VGKMKAIVEK (208 aa). The tract at residues 277–341 is DNA-binding; it reads VQKALKPPPI…EETEELKRFD (65 aa). Lysine 287 participates in a covalent cross-link: Glycyl lysine isopeptide (Lys-Gly) (interchain with G-Cter in SUMO2). Serine 306 is modified (phosphoserine). 3 positions are modified to N6-acetyllysine: lysine 317, lysine 331, and lysine 338. Lysine 317 is covalently cross-linked (Glycyl lysine isopeptide (Lys-Gly) (interchain with G-Cter in SUMO2)). The interaction with XRCC5 stretch occupies residues 373-482; the sequence is SLVIGSSTLF…YRSDSFENPV (110 aa). Residue threonine 455 is modified to Phosphothreonine. N6-acetyllysine is present on lysine 461. 2 positions are modified to phosphoserine: serine 477 and serine 520. A disordered region spans residues 536 to 562; sequence PEGKVTKRKHDNEGSGSKRPKVEYSEE. Residues lysine 539, lysine 542, and lysine 544 each carry the N6-acetyllysine modification. Serine 550 is subject to Phosphoserine. The tract at residues 550-609 is interaction with DEAF1; the sequence is SGSKRPKVEYSEEELKTHISKGTLGKFTVPMLKEACRAYGLKSGLKKQELLEALTKHFQD. Lysine 553 and lysine 556 each carry N6-acetyllysine. Lysine 556 is covalently cross-linked (Glycyl lysine isopeptide (Lys-Gly) (interchain with G-Cter in SUMO2)). Position 560 is a phosphoserine (serine 560). Lysine 570 is modified (N6,N6,N6-trimethyllysine). The region spanning 573-607 is the SAP domain; that stretch reads LGKFTVPMLKEACRAYGLKSGLKKQELLEALTKHF. The interval 578 to 583 is interaction with BAX; that stretch reads VPMLKE.

It belongs to the ku70 family. In terms of assembly, forms a heterodimer with XRCC5/Ku80; heterodimerization stabilizes XRCC5 protein. Component of the core long-range non-homologous end joining (NHEJ) complex (also named DNA-PK complex) composed of PRKDC, LIG4, XRCC4, XRCC6/Ku70, XRCC5/Ku86 and NHEJ1/XLF. Additional component of the NHEJ complex includes PAXX. Following autophosphorylation, PRKDC dissociates from DNA, leading to formation of the short-range NHEJ complex, composed of LIG4, XRCC4, XRCC6/Ku70, XRCC5/Ku86 and NHEJ1/XLF. The XRCC5-XRCC6 dimer also associates with NAA15, and this complex binds to the osteocalcin promoter and activates osteocalcin expression. In addition, XRCC6 interacts with the osteoblast-specific transcription factors MSX2, RUNX2 and DLX5. Interacts with ELF3. Interacts with ATP23. The XRCC5-XRRC6 dimer associates in a DNA-dependent manner with APEX1. Binds to CDK9 isoform 2. Identified in a complex with DEAF1 and XRCC5. Interacts with DEAF1 (via the SAND domain); the interaction is direct and may be inhibited by DNA-binding. Interacts with CLU. Interacts with NR4A3; the DNA-dependent protein kinase complex DNA-PK phosphorylates and activates NR4A3 and prevents NR4A3 ubiquitinylation and degradation. Interacts with CYREN isoform 1 (CYREN-1) and isoform 4 (CYREN-2) (via KBM motif). Interacts (via N-terminus) with HSF1 (via N-terminus); this interaction is direct and prevents XRCC5/XRCC6 heterodimeric binding and non-homologous end joining (NHEJ) repair activities induced by ionizing radiation (IR). Part of the HDP-RNP complex composed of at least HEXIM1, PRKDC, XRCC5, XRCC6, paraspeckle proteins (SFPQ, NONO, PSPC1, RBM14, and MATR3) and NEAT1 RNA. Interacts with HMBOX1. Interacts with ATF7. Interacts with APLF (via KBM motif). Interacts with WRN (via KBM motif). The XRCC5-XRCC6 dimer associates with ALKBH2. Interacts with TPRN; TPRN interacts with a number of DNA damage response proteins, is recruited to sites of DNA damage and may play a role in DNA damage repair. When not acetylated, interacts with BAX. Interacts with ERCC6L2. As to quaternary structure, (Microbial infection) Interacts with human T-cell leukemia virus 1/HTLV-1 protein HBZ. Phosphorylation by PRKDC may enhance helicase activity. Phosphorylation of Ser-51 does not affect DNA repair. In terms of processing, ADP-ribosylated by PARP3. Post-translationally, methylation by SETD4 leads to accumulation in the cytoplasm and is a prerequisite for acetylation, possibly due to the change of subcellular from the nucleus to the cytosol initiated by methylation, acetylation occurring in the cytosol. Acetylation can be catalyzed in vitro by CREBBP/CBP and KAT2B/PCAF.

It is found in the nucleus. Its subcellular location is the chromosome. It localises to the cytoplasm. Single-stranded DNA-dependent ATP-dependent helicase that plays a key role in DNA non-homologous end joining (NHEJ) by recruiting DNA-PK to DNA. Required for double-strand break repair and V(D)J recombination. Also has a role in chromosome translocation. Has a role in chromosome translocation. The DNA helicase II complex binds preferentially to fork-like ends of double-stranded DNA in a cell cycle-dependent manner. It works in the 3'-5' direction. During NHEJ, the XRCC5-XRRC6 dimer performs the recognition step: it recognizes and binds to the broken ends of the DNA and protects them from further resection. Binding to DNA may be mediated by XRCC6. The XRCC5-XRRC6 dimer acts as a regulatory subunit of the DNA-dependent protein kinase complex DNA-PK by increasing the affinity of the catalytic subunit PRKDC to DNA by 100-fold. The XRCC5-XRRC6 dimer is probably involved in stabilizing broken DNA ends and bringing them together. The assembly of the DNA-PK complex to DNA ends is required for the NHEJ ligation step. Probably also acts as a 5'-deoxyribose-5-phosphate lyase (5'-dRP lyase), by catalyzing the beta-elimination of the 5' deoxyribose-5-phosphate at an abasic site near double-strand breaks. 5'-dRP lyase activity allows to 'clean' the termini of abasic sites, a class of nucleotide damage commonly associated with strand breaks, before such broken ends can be joined. The XRCC5-XRRC6 dimer together with APEX1 acts as a negative regulator of transcription. In association with NAA15, the XRCC5-XRRC6 dimer binds to the osteocalcin promoter and activates osteocalcin expression. Plays a role in the regulation of DNA virus-mediated innate immune response by assembling into the HDP-RNP complex, a complex that serves as a platform for IRF3 phosphorylation and subsequent innate immune response activation through the cGAS-STING pathway. Negatively regulates apoptosis by interacting with BAX and sequestering it from the mitochondria. Might have deubiquitination activity, acting on BAX. This Homo sapiens (Human) protein is X-ray repair cross-complementing protein 6 (XRCC6).